We begin with the raw amino-acid sequence, 210 residues long: Putative 3-methyladenine DNA glycosylase (210 aa).

Belongs to the DNA glycosylase MPG family.

The protein is Putative 3-methyladenine DNA glycosylase of Lactobacillus acidophilus (strain ATCC 700396 / NCK56 / N2 / NCFM).